We begin with the raw amino-acid sequence, 616 residues long: Putative L-type lectin-domain containing receptor kinase I.10 (616 aa).

The N-terminal stretch at 1–22 is a signal peptide; it reads MAWGLFQILMISFFHLIKLSSQ. Over 23-288 the chain is Extracellular; sequence QETSFVYETF…RAEHKNLSPL (266 aa). Positions 24-258 are legume-lectin like; sequence ETSFVYETFR…YQYVLSWSFS (235 aa). Residues N56, N124, N181, N204, and N225 are each glycosylated (N-linked (GlcNAc...) asparagine). A helical transmembrane segment spans residues 289–309; the sequence is FIDLLGFLAIMGLCTLTGMYF. At 310 to 616 the chain is on the cytoplasmic side; it reads FKRGKYAEIT…SAASSATNSP (307 aa). The region spanning 343–616 is the Protein kinase domain; sequence FHKDGFLGKG…SAASSATNSP (274 aa). ATP is bound by residues 349-357 and K371; that span reads LGKGGFGEV. D467 functions as the Proton acceptor in the catalytic mechanism.

It in the C-terminal section; belongs to the protein kinase superfamily. Ser/Thr protein kinase family. This sequence in the N-terminal section; belongs to the leguminous lectin family.

The protein localises to the cell membrane. It carries out the reaction L-seryl-[protein] + ATP = O-phospho-L-seryl-[protein] + ADP + H(+). The enzyme catalyses L-threonyl-[protein] + ATP = O-phospho-L-threonyl-[protein] + ADP + H(+). The protein is Putative L-type lectin-domain containing receptor kinase I.10 (LECRK110) of Arabidopsis thaliana (Mouse-ear cress).